The sequence spans 191 residues: dCTP deaminase (191 aa).

Residues 112-117 (KSTYAR), 136-138 (TLE), Gln-157, Tyr-173, and Gln-183 contribute to the dCTP site. Catalysis depends on Glu-138, which acts as the Proton donor/acceptor.

It belongs to the dCTP deaminase family. In terms of assembly, homotrimer.

It catalyses the reaction dCTP + H2O + H(+) = dUTP + NH4(+). It functions in the pathway pyrimidine metabolism; dUMP biosynthesis; dUMP from dCTP (dUTP route): step 1/2. Catalyzes the deamination of dCTP to dUTP. In Xylella fastidiosa (strain M12), this protein is dCTP deaminase.